A 490-amino-acid polypeptide reads, in one-letter code: Stomatal closure-related actin-binding protein 3 (490 aa).

It belongs to the SCAB family. Expressed in roots, stems, leaves, siliques and flowers.

The protein localises to the cytoplasm. The protein resides in the cytoskeleton. In terms of biological role, probable plant-specific actin binding protein that bundles and stabilizes microfilaments (MFs). This is Stomatal closure-related actin-binding protein 3 from Arabidopsis thaliana (Mouse-ear cress).